A 203-amino-acid polypeptide reads, in one-letter code: dITP/XTP pyrophosphatase (203 aa).

A substrate-binding site is contributed by 7-12 (SGNLHK). Residues glutamate 47 and aspartate 77 each coordinate Mg(2+). The Proton acceptor role is filled by aspartate 77. Residues serine 78, 160–163 (FGYD), lysine 183, and 188–189 (HR) each bind substrate.

This sequence belongs to the HAM1 NTPase family. In terms of assembly, homodimer. It depends on Mg(2+) as a cofactor.

It carries out the reaction XTP + H2O = XMP + diphosphate + H(+). The enzyme catalyses dITP + H2O = dIMP + diphosphate + H(+). It catalyses the reaction ITP + H2O = IMP + diphosphate + H(+). Its function is as follows. Pyrophosphatase that catalyzes the hydrolysis of nucleoside triphosphates to their monophosphate derivatives, with a high preference for the non-canonical purine nucleotides XTP (xanthosine triphosphate), dITP (deoxyinosine triphosphate) and ITP. Seems to function as a house-cleaning enzyme that removes non-canonical purine nucleotides from the nucleotide pool, thus preventing their incorporation into DNA/RNA and avoiding chromosomal lesions. The chain is dITP/XTP pyrophosphatase from Opitutus terrae (strain DSM 11246 / JCM 15787 / PB90-1).